The sequence spans 587 residues: APOBEC1 complementation factor (587 aa).

RRM domains lie at 56-134 (CEIF…ASVD), 136-218 (CRLF…WAEP), and 231-303 (KILY…LAKP). Residues 360–409 (HFPATKGHLSNRAIIRAPSVRGAAGVRGLGGRGYLAYTGLGRGYQVKGDK) are required for nuclear localization. Residue T491 is modified to Phosphothreonine.

As to quaternary structure, part of the apolipoprotein B mRNA editing complex with APOBEC1. Interacts with TNPO2; TNPO2 may be responsible for transport of A1CF into the nucleus. Interacts with SYNCRIP. Interacts with CELF2/CUGBP2. Interacts with RBM47.

It is found in the nucleus. It localises to the endoplasmic reticulum. The protein resides in the cytoplasm. Essential component of the apolipoprotein B mRNA editing enzyme complex which is responsible for the postranscriptional editing of a CAA codon for Gln to a UAA codon for stop in APOB mRNA. Binds to APOB mRNA and is probably responsible for docking the catalytic subunit, APOBEC1, to the mRNA to allow it to deaminate its target cytosine. The complex also seems to protect the edited APOB mRNA from nonsense-mediated decay. The polypeptide is APOBEC1 complementation factor (A1CF) (Pongo abelii (Sumatran orangutan)).